Here is a 99-residue protein sequence, read N- to C-terminus: Essential MCU regulator, mitochondrial (99 aa).

Residues 1–39 (MAARVGVLSVAGFRAAARAGGLLRASKQSSAVSHVPCRT) constitute a mitochondrion transit peptide. Residues 40 to 57 (AIATSAGTVLPKPEKVSF) are Mitochondrial matrix-facing. The chain crosses the membrane as a helical span at residues 58 to 77 (GLLRVFTVVIPFLYIGTLIS). At 78–99 (KNFAALLEEHDIFVPEDDDDDD) the chain is on the mitochondrial intermembrane side.

The protein belongs to the SMDT1/EMRE family. As to quaternary structure, component of the uniplex complex.

The protein resides in the mitochondrion inner membrane. Essential regulatory subunit of the mitochondrial calcium uniporter complex (uniplex), a complex that mediates calcium uptake into mitochondria. Required to bridge the calcium-sensing proteins micu1 with the calcium-conducting subunit mcu. Acts by mediating activation of mcu and retention of micu1 to the mcu pore, in order to ensure tight regulation of the uniplex complex and appropriate responses to intracellular calcium signaling. This Xenopus tropicalis (Western clawed frog) protein is Essential MCU regulator, mitochondrial.